Reading from the N-terminus, the 254-residue chain is GTP cyclohydrolase III (254 aa).

It belongs to the archaeal-type GTP cyclohydrolase family.

It carries out the reaction GTP + 3 H2O = 2-amino-5-formylamino-6-(5-phospho-D-ribosylamino)pyrimidin-4(3H)-one + 2 phosphate + 2 H(+). Functionally, catalyzes the formation of 2-amino-5-formylamino-6-ribofuranosylamino-4(3H)-pyrimidinone ribonucleotide monophosphate and inorganic phosphate from GTP. Also has an independent pyrophosphate phosphohydrolase activity. The polypeptide is GTP cyclohydrolase III (Methanobrevibacter smithii (strain ATCC 35061 / DSM 861 / OCM 144 / PS)).